The sequence spans 569 residues: Proline--tRNA ligase (569 aa).

Belongs to the class-II aminoacyl-tRNA synthetase family. ProS type 1 subfamily. Homodimer.

It is found in the cytoplasm. The catalysed reaction is tRNA(Pro) + L-proline + ATP = L-prolyl-tRNA(Pro) + AMP + diphosphate. In terms of biological role, catalyzes the attachment of proline to tRNA(Pro) in a two-step reaction: proline is first activated by ATP to form Pro-AMP and then transferred to the acceptor end of tRNA(Pro). As ProRS can inadvertently accommodate and process non-cognate amino acids such as alanine and cysteine, to avoid such errors it has two additional distinct editing activities against alanine. One activity is designated as 'pretransfer' editing and involves the tRNA(Pro)-independent hydrolysis of activated Ala-AMP. The other activity is designated 'posttransfer' editing and involves deacylation of mischarged Ala-tRNA(Pro). The misacylated Cys-tRNA(Pro) is not edited by ProRS. This Colwellia psychrerythraea (strain 34H / ATCC BAA-681) (Vibrio psychroerythus) protein is Proline--tRNA ligase.